The primary structure comprises 431 residues: Divalent metal cation transporter MntH (431 aa).

A run of 12 helical transmembrane segments spans residues 30-50 (WSWTAFFGPALIAAVAYIDPG), 63-83 (GYTLLWVVLAANLMAMLIQTL), 106-126 (PLVWCYWVQAEIVAIATDLAE), 137-159 (LFGLSLMEGALLTGTITYLALHL), 169-189 (ILIGAMILAVAGGFILELVLS), 209-229 (YALYLAAGILGATVMPHVIYL), 257-277 (VILGMAIAGLVNLSMLAMAAA), 287-307 (VATISDSYLLLAPVVGQVTAS), 309-329 (VFGLALLLAGLSSSIVGTLSG), 341-361 (IPLWLRRLVTMLPALAVIMLG), 367-387 (ALVASQVILSFGIPFALVPLL), and 405-425 (VTGVGTVVCTLIVALNVYVLF).

The protein belongs to the NRAMP family.

The protein resides in the cell inner membrane. Functionally, h(+)-stimulated, divalent metal cation uptake system. This is Divalent metal cation transporter MntH from Chromohalobacter salexigens (strain ATCC BAA-138 / DSM 3043 / CIP 106854 / NCIMB 13768 / 1H11).